The following is a 141-amino-acid chain: Hemoglobin subunit alpha-A (141 aa).

The Globin domain occupies 1 to 141 (VLSASDKTNV…VAKELTAKYR (141 aa)). Residue His58 coordinates O2. A heme b-binding site is contributed by His87.

Belongs to the globin family. Heterotetramer of two alpha chains and two beta chains. Red blood cells.

Its function is as follows. Involved in oxygen transport from the lung to the various peripheral tissues. In Phalacrocorax carbo (Great cormorant), this protein is Hemoglobin subunit alpha-A (HBAA).